Reading from the N-terminus, the 273-residue chain is N-alpha-acetyltransferase 30 (273 aa).

Disordered regions lie at residues 1–39 (MADA…HQLN) and 62–85 (QKTR…PNGL). The N-acetyltransferase domain maps to 125-273 (RYVRYESELQ…DALRLKLWLR (149 aa)).

Belongs to the acetyltransferase family. MAK3 subfamily. As to quaternary structure, component of the N-terminal acetyltransferase C (NatC) complex.

It localises to the cytoplasm. The protein resides in the nucleus. It catalyses the reaction N-terminal L-methionyl-L-leucyl-[protein] + acetyl-CoA = N-terminal N(alpha)-acetyl-L-methionyl-L-leucyl-[protein] + CoA + H(+). It carries out the reaction N-terminal L-methionyl-L-isoleucyl-[protein] + acetyl-CoA = N-terminal N(alpha)-acetyl-L-methionyl-L-isoleucyl-[protein] + CoA + H(+). The catalysed reaction is N-terminal L-methionyl-L-phenylalanyl-[protein] + acetyl-CoA = N-terminal N(alpha)-acetyl-L-methionyl-L-phenylalanyl-[protein] + CoA + H(+). The enzyme catalyses N-terminal L-methionyl-L-tryptophyl-[protein] + acetyl-CoA = N-terminal N(alpha)-acetyl-L-methionyl-L-tryptophyl-[protein] + CoA + H(+). It catalyses the reaction N-terminal L-methionyl-L-tyrosyl-[protein] + acetyl-CoA = N-terminal N(alpha)-acetyl-L-methionyl-L-tyrosyl-[protein] + CoA + H(+). Its function is as follows. Catalytic subunit of the N-terminal acetyltransferase C (NatC) complex. Catalyzes acetylation of the N-terminal methionine residues of peptides beginning with Met-Leu-Ala and Met-Leu-Gly. N-terminal acetylation protects proteins from ubiquitination and degradation by the N-end rule pathway. The sequence is that of N-alpha-acetyltransferase 30 (naa30) from Xenopus laevis (African clawed frog).